The sequence spans 1048 residues: Probable histidine kinase 2 (1048 aa).

Over 1–16 (MREVEEVSKWRRRCCY) the chain is Cytoplasmic. The helical transmembrane segment at 17–37 (FWILFPLAVIATCMTITVVTF) threads the bilayer. Residues 38 to 336 (CSSTMYMTEV…AMVGVFRRGG (299 aa)) are Extracellular-facing. The helical transmembrane segment at 337–357 (VTMVAVACAAAAAATVACVLM) threads the bilayer. Residues 358–1048 (ARALRRAVAR…AVHGVCKGKN (691 aa)) lie on the Cytoplasmic side of the membrane. Residues 398 to 662 (SASHDIRSAL…CFGFNVLLKT (265 aa)) form the Histidine kinase domain. At His401 the chain carries Phosphohistidine; by autocatalysis. The Response regulatory domain maps to 912 to 1044 (HVLLVEDTLV…RIVEAVHGVC (133 aa)). The residue at position 975 (Asp975) is a 4-aspartylphosphate.

Activation probably requires a transfer of a phosphate group between a His in the transmitter domain and an Asp of the receiver domain.

It localises to the cell membrane. The catalysed reaction is ATP + protein L-histidine = ADP + protein N-phospho-L-histidine.. Cytokinin receptor related to bacterial two-component regulators. Functions as a histidine kinase and transmits the stress signal to a downstream MAPK cascade. The polypeptide is Probable histidine kinase 2 (Oryza sativa subsp. indica (Rice)).